Here is a 112-residue protein sequence, read N- to C-terminus: M-myrmeciitoxin-Mp1 (112 aa).

A signal peptide spans 1–26 (MKLSCLLLTLTIIFVLTIVHAPNVEA). A propeptide spanning residues 27 to 56 (KDLADPESEAVGFADAFGEADAVGEADPNA) is cleaved from the precursor. The interval 57–78 (GLGSVFGRLARILGRVIPKVAK) is critical for cytotoxic activity. An igE-binding determinant region spans residues 93-106 (KEAIPMAVEMAKSQ).

The protein belongs to the formicidae venom precursor-01 superfamily. Ant pilosulin family. In terms of tissue distribution, expressed by the venom gland.

The protein resides in the secreted. In terms of biological role, has strong cytotoxic and hemolytic activities. Is more potent against mononuclear leukocytes than against granulocytes. The synthesized peptide 57-76 shows a potent and broad spectrum antimicrobial activity against both Gram-positive and Gram-negative bacteria, and also against the fungus C.albicans. Adopts an alpha-helical structure. The polypeptide is M-myrmeciitoxin-Mp1 (Myrmecia pilosula (Jack jumper ant)).